The following is a 476-amino-acid chain: Beta-amyrin 28-monooxygenase (476 aa).

A helical membrane pass occupies residues 2–22; the sequence is ELLYVCLVCVFVFLVSLLLLY. C421 serves as a coordination point for heme.

It belongs to the cytochrome P450 family. It depends on heme as a cofactor. As to expression, specifically expressed in roots.

Its subcellular location is the membrane. The enzyme catalyses beta-amyrin + 3 reduced [NADPH--hemoprotein reductase] + 3 O2 = oleanolate + 3 oxidized [NADPH--hemoprotein reductase] + 4 H2O + 4 H(+). Catalyzes the carboxylation of beta-amyrin at the C-28 position to form oleanolate. Catalyzes the carboxylation of alpha-amyrin at the C-28 position to form ursolate. The protein is Beta-amyrin 28-monooxygenase (CYP716A44) of Solanum lycopersicum (Tomato).